The primary structure comprises 112 residues: ATP synthase epsilon chain (112 aa).

The protein belongs to the ATPase epsilon chain family. F-type ATPases have 2 components, CF(1) - the catalytic core - and CF(0) - the membrane proton channel. CF(1) has five subunits: alpha(3), beta(3), gamma(1), delta(1), epsilon(1). CF(0) has three main subunits: a, b and c.

It is found in the cell membrane. Its function is as follows. Produces ATP from ADP in the presence of a proton gradient across the membrane. The polypeptide is ATP synthase epsilon chain (Rickettsia africae (strain ESF-5)).